The chain runs to 334 residues: N-acetyl-gamma-glutamyl-phosphate reductase (334 aa).

Residue Cys-154 is part of the active site.

It belongs to the NAGSA dehydrogenase family. Type 1 subfamily.

The protein resides in the cytoplasm. It carries out the reaction N-acetyl-L-glutamate 5-semialdehyde + phosphate + NADP(+) = N-acetyl-L-glutamyl 5-phosphate + NADPH + H(+). It participates in amino-acid biosynthesis; L-arginine biosynthesis; N(2)-acetyl-L-ornithine from L-glutamate: step 3/4. Catalyzes the NADPH-dependent reduction of N-acetyl-5-glutamyl phosphate to yield N-acetyl-L-glutamate 5-semialdehyde. The polypeptide is N-acetyl-gamma-glutamyl-phosphate reductase (Escherichia coli (strain K12)).